The sequence spans 145 residues: NADH-quinone oxidoreductase subunit A (145 aa).

Helical transmembrane passes span 14–34 (FAVF…GGFL), 66–86 (FYLV…LYAW), and 96–116 (VGFI…VYLV).

Belongs to the complex I subunit 3 family. In terms of assembly, NDH-1 is composed of 13 different subunits. Subunits NuoA, H, J, K, L, M, N constitute the membrane sector of the complex.

The protein localises to the cell inner membrane. The enzyme catalyses a quinone + NADH + 5 H(+)(in) = a quinol + NAD(+) + 4 H(+)(out). Functionally, NDH-1 shuttles electrons from NADH, via FMN and iron-sulfur (Fe-S) centers, to quinones in the respiratory chain. The immediate electron acceptor for the enzyme in this species is believed to be ubiquinone. Couples the redox reaction to proton translocation (for every two electrons transferred, four hydrogen ions are translocated across the cytoplasmic membrane), and thus conserves the redox energy in a proton gradient. This chain is NADH-quinone oxidoreductase subunit A, found in Sodalis glossinidius (strain morsitans).